The chain runs to 552 residues: Iduronate 2-sulfatase (552 aa).

The first 29 residues, 1-29 (MSPPPPPPIWRQLSFSLLLGSFCIALESA), serve as a signal peptide directing secretion. The propeptide occupies 30–35 (AQGNSA). Ca(2+) contacts are provided by Asp-47, Asp-48, and Cys-86. The active-site Nucleophile is Cys-86. 3-oxoalanine (Cys) is present on Cys-86. Residue Asn-117 is glycosylated (N-linked (GlcNAc...) asparagine). Residue His-140 is part of the active site. An N-linked (GlcNAc...) asparagine glycan is attached at Asn-146. An intrachain disulfide couples Cys-173 to Cys-186. N-linked (GlcNAc...) asparagine glycans are attached at residues Asn-248 and Asn-282. Positions 336 and 337 each coordinate Ca(2+). An intrachain disulfide couples Cys-424 to Cys-434. Asn-515 and Asn-539 each carry an N-linked (GlcNAc...) asparagine glycan.

The protein belongs to the sulfatase family. As to quaternary structure, monomer. The 58-kDa mature form is composed of two chains resulting from proteolitic processing, the 42-kDa chain and the 14-kDa chain that remain stably associated and form the 58-kDa intermediate form which is enzymatically active. Ca(2+) is required as a cofactor. Post-translationally, synthesized as a 75-kDa precursor form in the endoplasmic reticulum (ER), and then processed by proteolytic cleavage through various intermediates to yield a 55-kDa mature form, with the release of an 18 kDa polypeptide. The conversion to 3-oxoalanine (also known as C-formylglycine, FGly), of a serine or cysteine residue in prokaryotes and of a cysteine residue in eukaryotes, is critical for catalytic activity. Found to be expressed in alpha and beta pancreatic cells.

The protein localises to the lysosome. The catalysed reaction is Hydrolysis of the 2-sulfate groups of the L-iduronate 2-sulfate units of dermatan sulfate, heparan sulfate and heparin.. Its function is as follows. Lysosomal enzyme involved in the degradation pathway of dermatan sulfate and heparan sulfate. This Mus musculus (Mouse) protein is Iduronate 2-sulfatase (Ids).